The primary structure comprises 622 residues: 1-deoxy-D-xylulose-5-phosphate synthase (622 aa).

Residues His-74 and 115-117 (GHS) contribute to the thiamine diphosphate site. A Mg(2+)-binding site is contributed by Asp-146. Residues 147-148 (GA), Asn-177, Phe-285, and Glu-366 contribute to the thiamine diphosphate site. Asn-177 is a binding site for Mg(2+).

Belongs to the transketolase family. DXPS subfamily. Homodimer. The cofactor is Mg(2+). Thiamine diphosphate is required as a cofactor.

The catalysed reaction is D-glyceraldehyde 3-phosphate + pyruvate + H(+) = 1-deoxy-D-xylulose 5-phosphate + CO2. It functions in the pathway metabolic intermediate biosynthesis; 1-deoxy-D-xylulose 5-phosphate biosynthesis; 1-deoxy-D-xylulose 5-phosphate from D-glyceraldehyde 3-phosphate and pyruvate: step 1/1. In terms of biological role, catalyzes the acyloin condensation reaction between C atoms 2 and 3 of pyruvate and glyceraldehyde 3-phosphate to yield 1-deoxy-D-xylulose-5-phosphate (DXP). The protein is 1-deoxy-D-xylulose-5-phosphate synthase of Magnetococcus marinus (strain ATCC BAA-1437 / JCM 17883 / MC-1).